A 445-amino-acid chain; its full sequence is Trigger factor (445 aa).

The PPIase FKBP-type domain maps to 164–249; the sequence is GDQVTFDFEG…VKKVEEAKLP (86 aa).

Belongs to the FKBP-type PPIase family. Tig subfamily.

It localises to the cytoplasm. It carries out the reaction [protein]-peptidylproline (omega=180) = [protein]-peptidylproline (omega=0). Involved in protein export. Acts as a chaperone by maintaining the newly synthesized protein in an open conformation. Functions as a peptidyl-prolyl cis-trans isomerase. This Psychrobacter sp. (strain PRwf-1) protein is Trigger factor.